Reading from the N-terminus, the 2399-residue chain is MTHSNATRVLVFGDQTYDFVPKLRELFHVKDNPILTAFLEQSHYVVRAQMIQTLPPAEHKAARTFDLADMLKKYVAGKLNPAFQTALSCITQLGVFMREFHDFTKPYPRHDSSYVLGICTGSLAAAAVSSSNSLSELLPIAVQTALIAFRLGLCVTDMRDRLESSEEDRTQPWSVVLFDTDEQTVTKAIKDFCTSNVLPKTKQPWITSASSKTITISGAPRVLKKLSQEPALKDKKTRQIPIYVPAHNSALFTPEDVKSILETTPVDTWSNYPTKLPFISSVSGKMAWADNYLAVIHLALNQCLLESIGWGKVETELPRLLKSRGAENVLITPITTSADRALSAALSPTISNIEVEKPTINESFAHRPGSGKSKLAIVSMSGRFPEAQSTDAFWDLLYKGLDVVKEVPKRRWDVETHVDPTGRARNKGATKWGCWLDFAGEFDPRFFSISPKEAPQMDPAQRMALMSTWEAMERGGIVPDTTPSTQRNRIGVFHGVTSNDWMETNTAQNIDTYFITGGNRGFIPGRINFCFEFSGPSFTNDTACSSSLAAIHLACNSLWRGDCDTAVAGGTNMIFTPDGHAGLDKGFFLSRTGNCKPFDDKADGYCRAEGVGTVMVKRLEDALADGDPILGTILDAKTNHSAMSDSMTRPFVPAQIDNMEACLSTAGVDPTSLDYIEMHGTGTQVGDAVEMESVLSVFAPNEQFRGKDQPLYVGSAKANIGHGEGVSGVTSLIKVLLMMQNNTIPPHCGIKPGSKINHNYPDLAARNVHIAFEPKPFLRREGKLRRVLINNFSAAGGNTALLIEDAPDRMPLSGQDPRTTQTVTISGHVGKSLSNNVANLLAHLKKNPTIDLSQLAYTVSARRWHHLHRVAVAGTTVADITAKLEKAIENKEGVNRPKAKPSVFFAFTGQGSQYLGMGKQLYDSYPMFRSELQGYDRLAQSQGFPSFAHIFTETKGDVEQNLPVVVQLAITCLQMALFNLVTSFGIKASAVVGHSLGEYAALYAAGVLSASDTIYLVGKRAELLQDHCQRGTHAMLACKASEWSLAEITAGKNVEVACVNGPEDTVLSGTVEEIGEVQKTLSAKSIKATLLKLPFAFHSAQVQPILEDFEELAAGATFEKPKLAVISPLLGSVVEDEGVVGPNYLARHCREAVGMVKALGVAKEKGIINEKTIVIEIGPKPLLCGMIKNILGQNIVALPTLKDKGPDVWQNLSNIFTTLYTGGLDINWTAFHAPFEPAKKVLQLPDYGWDLKDYFIQYEGDWVLHRHKIHCNCADAGKDVHNTSHYCPGKHTFAENVVVPGGAQKAVQEAPAAKTETKKMSKLDPTKEAYPGIPLTTTVHKVIEEKTEPLGAQFTVETDISRKDVNSIAQGHTVDSIPLCTPSFYADIALQVGKYAMDRIRAGHPGAGAIDGRVDVTDLVVDKALIPHGKAPQLLRTNVTMSWPPKMAATTRSAKVTFKTYTADGKLDTDHAYCTVRFTTDSQQKSLQKKVPEYKAAIAKLRARDAKGELTHYNTKSGYKLMSSMAHFHPDYKLLDNLVLNEAENEAVSVMNFSSCTDAGIYAAHPAYVDAITQVGGFAMNAKDDTDIDKEVYVNHGWESFQVYKKMEKSVEYVVYSKMTKDPKGDMVHGDTIVLDGDEVVAFFRGLSLRSVPRKALRAVLQSAMDKGIRQRGGKPGAAKGAVAAPAPAKKMVEPVKAASKKETPAAAAPPSPSKAAPPPAPKPAALKASVPKADPGKVDEALKIISEESGIALDELTDDSNFTDMGVDSLSSMVITSRLREDLELDLAPDFALFADCPTVASLRTFLAGAAGGPTDSPAAIATLEFGEPTPAKELEAGPALKSTPISPGVQALQPVPAPTPAPKPVITSPAAPVSSKVFDDALQIISEESGIALDELTDDSNFTDMGVDSLSSMVITSRLREDLELDLSPDWALFADCPTVASLRSFLGGSGPGSTAPADADTPVDTTAAEIEAPVPNEAASYMPNSSQADVDDAVAAVIGNDPPRRPEPPKQAAAPAVARTEALNAALDIIAEESGVAAEDFTDDTIFSDIGIDSLCSMVISSRFREELELDLDSQFSLFVDLPTVAQLREFLTGSSADSDSSSVASNPADPAATPPRSESSDTEPDDEAPSKPKSGPGSTDSCRSTNSVILQGKPKTAAKTLFLLPDGGGSASSYSVIPKLQSDVAVVGINCPYARDPENMTCTWQAMMQSFINEIKRRQPKGPYHLGGWSSGGAFAYVTAEKMIKQGDEVGSLFIFDAPVPQVMEKLPREFYEAVNFTESTAVGTAEPPPYLIPHFMAVVDVMLDYKCKPLQTKKMPNVGLIWADSTVMKEDEAPKMKGMHFMIQKRTNFGPDGWDEVCPGAKFEIVKAVDTNHFTLMTKARVNYVSDLIDKVMG.

Residues 10 to 247 (LVFGDQTYDF…RQIPIYVPAH (238 aa)) are starter unit:ACP transacylase (SAT) domain. Residues 372–805 (KSKLAIVSMS…GGNTALLIED (434 aa)) form the Ketosynthase family 3 (KS3) domain. Catalysis depends on for beta-ketoacyl synthase activity residues C544, H679, and H722. Residues 905–1192 (FAFTGQGSQY…LCGMIKNILG (288 aa)) are malonyl-CoA:ACP transacylase (MAT) domain. The active-site For acyl/malonyl transferase activity is S995. Positions 1307 to 1327 (VQEAPAAKTETKKMSKLDPTK) are disordered. Positions 1315–1327 (TETKKMSKLDPTK) are enriched in basic and acidic residues. Positions 1340 to 1483 (HKVIEEKTEP…CTVRFTTDSQ (144 aa)) are N-terminal hotdog fold. The 319-residue stretch at 1340-1658 (HKVIEEKTEP…LRSVPRKALR (319 aa)) folds into the PKS/mFAS DH domain. Residues 1353–1658 (QFTVETDISR…LRSVPRKALR (306 aa)) are product template (PT) domain. The Proton acceptor; for dehydratase activity role is filled by H1372. A C-terminal hotdog fold region spans residues 1510–1658 (LTHYNTKSGY…LRSVPRKALR (149 aa)). Residue D1570 is the Proton donor; for dehydratase activity of the active site. The interval 1665-1734 (MDKGIRQRGG…AALKASVPKA (70 aa)) is disordered. The span at 1677–1698 (GAAKGAVAAPAPAKKMVEPVKA) shows a compositional bias: low complexity. Residues 1708–1723 (AAPPSPSKAAPPPAPK) are compositionally biased toward pro residues. The span at 1724–1734 (PAALKASVPKA) shows a compositional bias: low complexity. 3 consecutive Carrier domains span residues 1733-1812 (KADP…AGAA), 1877-1953 (SKVF…GGSG), and 2020-2099 (VART…TGSS). O-(pantetheine 4'-phosphoryl)serine occurs at positions 1770, 1911, and 2057. Residues 2098-2115 (SSADSDSSSVASNPADPA) show a composition bias toward low complexity. Residues 2098–2149 (SSADSDSSSVASNPADPAATPPRSESSDTEPDDEAPSKPKSGPGSTDSCRST) are disordered. Residues 2140 to 2149 (PGSTDSCRST) show a composition bias toward polar residues. A thioesterase/Claisen cyclase (TE/CLC) domain region spans residues 2164 to 2393 (TLFLLPDGGG…KARVNYVSDL (230 aa)). S2234 serves as the catalytic For thioesterase activity.

Requires pantetheine 4'-phosphate as cofactor.

It carries out the reaction hexanoyl-[ACP] + 7 malonyl-CoA + 6 H(+) = noranthrone + holo-[ACP] + 7 CO2 + 7 CoA + 2 H2O. It functions in the pathway mycotoxin biosynthesis. Its function is as follows. Polyketide synthase; part of the fragmented gene cluster that mediates the biosynthesis of dothistromin (DOTH), a polyketide toxin very similar in structure to the aflatoxin precursor, versicolorin B. The first step of the pathway is the conversion of acetate to norsolorinic acid (NOR) and requires the fatty acid synthase subunits hexA and hexB, as well as the polyketide synthase pksA. PksA combines a hexanoyl starter unit and 7 malonyl-CoA extender units to synthesize the precursor NOR. The hexanoyl starter unit is provided to the acyl-carrier protein (ACP) domain by the fungal fatty acid synthase hexA/hexB. The second step is the conversion of NOR to averantin (AVN) and requires the norsolorinic acid ketoreductase nor1, which catalyzes the dehydration of norsolorinic acid to form (1'S)-averantin. The cytochrome P450 monooxygenase avnA then catalyzes the hydroxylation of AVN to 5'hydroxyaverantin (HAVN). The next step is performed by adhA that transforms HAVN to averufin (AVF). Averufin might then be converted to hydroxyversicolorone by cypX and avfA. Hydroxyversicolorone is further converted versiconal hemiacetal acetate (VHA) by moxY. VHA is then the substrate for the versiconal hemiacetal acetate esterase est1 to yield versiconal (VAL). Versicolorin B synthase vbsA then converts VAL to versicolorin B (VERB) by closing the bisfuran ring. Then, the activity of the versicolorin B desaturase verB leads to versicolorin A (VERA). DotB, a predicted chloroperoxidase, may perform epoxidation of the A-ring of VERA. Alternatively, a cytochrome P450, such as cypX or avnA could catalyze this step. It is also possible that another, uncharacterized, cytochrome P450 enzyme is responsible for this step. Opening of the epoxide could potentially be achieved by the epoxide hydrolase epoA. However, epoA seems not to be required for DOTH biosynthesis, but other epoxide hydrolases may have the ability to complement this hydrolysis. Alternatively, opening of the epoxide ring could be achieved non-enzymatically. The next step is the deoxygenation of ring A to yield the 5,8-dihydroxyanthraquinone which is most likely catalyzed by the NADPH dehydrogenase encoded by ver1. The last stages of DOTH biosynthesis are proposed to involve hydroxylation of the bisfuran. OrdB and norB might have oxidative roles here. An alternative possibility is that cytochrome P450 monoogenases such as avnA and cypX might perform these steps in addition to previously proposed steps. This chain is Norsolorinic acid synthase, found in Dothistroma septosporum (Red band needle blight fungus).